A 562-amino-acid polypeptide reads, in one-letter code: Arginine--tRNA ligase (562 aa).

The 'HIGH' region motif lies at 129-139; that stretch reads ANPTGPLHVGH.

Belongs to the class-I aminoacyl-tRNA synthetase family. As to quaternary structure, monomer.

It localises to the cytoplasm. It catalyses the reaction tRNA(Arg) + L-arginine + ATP = L-arginyl-tRNA(Arg) + AMP + diphosphate. The protein is Arginine--tRNA ligase of Xylella fastidiosa (strain M23).